The chain runs to 313 residues: GTP cyclohydrolase MptA (313 aa).

This sequence belongs to the GTP cyclohydrolase IV family. Homodimer. Requires Fe(2+) as cofactor.

The catalysed reaction is GTP + H2O = 7,8-dihydroneopterin 2',3'-cyclic phosphate + formate + diphosphate + H(+). It participates in cofactor biosynthesis; 5,6,7,8-tetrahydromethanopterin biosynthesis. Converts GTP to 7,8-dihydro-D-neopterin 2',3'-cyclic phosphate, the first intermediate in the biosynthesis of coenzyme methanopterin. This chain is GTP cyclohydrolase MptA, found in Methanosphaera stadtmanae (strain ATCC 43021 / DSM 3091 / JCM 11832 / MCB-3).